Consider the following 118-residue polypeptide: MSTLYDNIGGQPAIEQVVDELHKRIATDSLLAPVFAGTDMVKQRNHLVAFLAQIFEGPKQYGGRPMDKTHAGLNLQQPHFDAIAKHLGERMAVRGVSAENTKAALDRVTNMKGAILNK.

H70 contributes to the heme binding site.

It belongs to the truncated hemoglobin family. Group I subfamily. In terms of assembly, monomer. The cofactor is heme.

It localises to the membrane. The chain is Group 1 truncated hemoglobin GlbN (glbN) from Nostoc commune.